A 172-amino-acid polypeptide reads, in one-letter code: NAD(P)H-quinone oxidoreductase subunit I, chloroplastic (172 aa).

4Fe-4S ferredoxin-type domains lie at 55–84 (GRIH…VDWK) and 95–124 (LNYS…MTEE). [4Fe-4S] cluster-binding residues include Cys-64, Cys-67, Cys-70, Cys-74, Cys-104, Cys-107, Cys-110, and Cys-114.

The protein belongs to the complex I 23 kDa subunit family. In terms of assembly, NDH is composed of at least 16 different subunits, 5 of which are encoded in the nucleus. It depends on [4Fe-4S] cluster as a cofactor.

The protein resides in the plastid. It is found in the chloroplast thylakoid membrane. It catalyses the reaction a plastoquinone + NADH + (n+1) H(+)(in) = a plastoquinol + NAD(+) + n H(+)(out). The catalysed reaction is a plastoquinone + NADPH + (n+1) H(+)(in) = a plastoquinol + NADP(+) + n H(+)(out). In terms of biological role, NDH shuttles electrons from NAD(P)H:plastoquinone, via FMN and iron-sulfur (Fe-S) centers, to quinones in the photosynthetic chain and possibly in a chloroplast respiratory chain. The immediate electron acceptor for the enzyme in this species is believed to be plastoquinone. Couples the redox reaction to proton translocation, and thus conserves the redox energy in a proton gradient. The sequence is that of NAD(P)H-quinone oxidoreductase subunit I, chloroplastic from Crucihimalaya wallichii (Rock-cress).